A 378-amino-acid polypeptide reads, in one-letter code: Actin-related protein 2/3 complex subunit 1A (378 aa).

WD repeat units follow at residues 8–47, 53–92, 97–138, 143–182, 203–242, 257–295, and 331–375; these read RFAE…HWER, KHDQ…WVPT, RLNR…WVSK, RHES…VDTK, LSYS…PLAQ, ISEK…KAAS, and VHDN…QELG.

This sequence belongs to the WD repeat ARPC1 family. In terms of assembly, component of the Arp2/3 complex composed of ARP2, ARP3, ARPC1/p41-ARC, ARPC2/p34-ARC, ARPC3/p21-ARC, ARPC4/p20-ARC and ARPC5/p16-ARC. In terms of tissue distribution, expressed at low levels in all tissues with a relatively highest expression in inflorescences.

The protein localises to the cytoplasm. The protein resides in the cytoskeleton. Functionally, functions as a component of the Arp2/3 complex which is involved in regulation of actin polymerization and together with an activating nucleation-promoting factor (NPF) mediates the formation of branched actin networks. Arp2/3 complex plays a critical role in the control of cell morphogenesis via the modulation of cell polarity development. This chain is Actin-related protein 2/3 complex subunit 1A (ARPC1A), found in Arabidopsis thaliana (Mouse-ear cress).